The primary structure comprises 407 residues: Argininosuccinate synthase (407 aa).

ATP contacts are provided by residues 13-21 (AYSGGLDTS) and Ala-40. L-citrulline is bound by residues Tyr-91 and Ser-96. Residue Gly-121 participates in ATP binding. 3 residues coordinate L-aspartate: Thr-123, Asn-127, and Asp-128. Residue Asn-127 participates in L-citrulline binding. Arg-131, Ser-182, Ser-191, Glu-267, and Tyr-279 together coordinate L-citrulline.

Belongs to the argininosuccinate synthase family. Type 1 subfamily. Homotetramer.

It localises to the cytoplasm. The enzyme catalyses L-citrulline + L-aspartate + ATP = 2-(N(omega)-L-arginino)succinate + AMP + diphosphate + H(+). It participates in amino-acid biosynthesis; L-arginine biosynthesis; L-arginine from L-ornithine and carbamoyl phosphate: step 2/3. This Rhizobium etli (strain ATCC 51251 / DSM 11541 / JCM 21823 / NBRC 15573 / CFN 42) protein is Argininosuccinate synthase.